The sequence spans 53 residues: MLSWAITFLIIAIIAAVLGFGGIAGAATGIAKILFVLFLVLFVVSFFFGRRRG.

2 helical membrane-spanning segments follow: residues 4 to 24 and 29 to 49; these read WAITFLIIAIIAAVLGFGGIA and GIAKILFVLFLVLFVVSFFFG.

Belongs to the UPF0391 family.

It localises to the cell membrane. This is UPF0391 membrane protein PA5482 from Pseudomonas aeruginosa (strain ATCC 15692 / DSM 22644 / CIP 104116 / JCM 14847 / LMG 12228 / 1C / PRS 101 / PAO1).